Reading from the N-terminus, the 1504-residue chain is DNA-directed RNA polymerase subunit beta' (1504 aa).

The Zn(2+) site is built by cysteine 60, cysteine 62, cysteine 75, and cysteine 78. The interval 265–294 (RKQRDLEDAEQLTGAERERKEYEASQERER) is disordered. Basic and acidic residues predominate over residues 279–294 (AERERKEYEASQERER). Mg(2+) contacts are provided by aspartate 626, aspartate 628, and aspartate 630. Cysteine 1002, cysteine 1075, cysteine 1082, and cysteine 1085 together coordinate Zn(2+). The segment at 1468 to 1504 (RALIGGDGDDGERNNGDFDDQVGEDVVIPPDDDDQEA) is disordered.

Belongs to the RNA polymerase beta' chain family. As to quaternary structure, the RNAP catalytic core consists of 2 alpha, 1 beta, 1 beta' and 1 omega subunit. When a sigma factor is associated with the core the holoenzyme is formed, which can initiate transcription. Mg(2+) is required as a cofactor. Zn(2+) serves as cofactor.

It carries out the reaction RNA(n) + a ribonucleoside 5'-triphosphate = RNA(n+1) + diphosphate. DNA-dependent RNA polymerase catalyzes the transcription of DNA into RNA using the four ribonucleoside triphosphates as substrates. The protein is DNA-directed RNA polymerase subunit beta' of Roseiflexus sp. (strain RS-1).